Consider the following 113-residue polypeptide: Early nodulin-12B (113 aa).

A signal peptide spans 1 to 24; it reads MASFSLSILVFFISALVLVPQGFA. Residues 29–113 form a disordered region; sequence NPAYRPPQTK…HPPAEDNIHF (85 aa). Over residues 32-42 the composition is skewed to pro residues; the sequence is YRPPQTKPPVN. 2 consecutive repeat copies span residues 34 to 38 and 39 to 43. The 15 X 5 AA approximate tandem repeats of P-P-[QVHRTA]-[NHKE]-[KEDT] stretch occupies residues 34–109; sequence PPQTKPPVNK…PTHKHPPAED (76 aa). One copy of the 3; approximate repeat lies at 44–48; the sequence is PSHKE. Basic and acidic residues-rich tracts occupy residues 45-60 and 67-113; these read SHKE…KEPP and KEPP…NIHF. 3 repeat units span residues 49–53, 54–58, and 59–63. One copy of the 7; approximate repeat lies at 64–68; it reads PRHKE. 4 tandem repeats follow at residues 69-73, 74-78, 79-83, and 84-88. The stretch at 89–93 is one 12; approximate repeat; the sequence is SPVHK. 3 repeat units span residues 94–98, 99–103, and 105–109.

Belongs to the plant proline-rich protein superfamily. ENOD12 family. In terms of tissue distribution, expressed only in young nodules.

The protein localises to the secreted. It localises to the cell wall. Involved in the infection process during the plant-rhizobium interaction. In Medicago sativa (Alfalfa), this protein is Early nodulin-12B (ENOD12B).